The following is a 336-amino-acid chain: Palmitoyltransferase SWF1 (336 aa).

At 1 to 2 the chain is on the lumenal side; it reads MS. A helical membrane pass occupies residues 3-23; the sequence is WNLLFVLLIGFVVLILLSPVF. Over 24-50 the chain is Cytoplasmic; sequence KSTWPFSTFYRNVFQPFLVDDQKYRWK. A helical transmembrane segment spans residues 51–71; that stretch reads LHLVPLFYTSIYLYLVYTYHM. At 72–86 the chain is on the lumenal side; the sequence is RVESTIKNELFLLER. Residues 87–107 form a helical membrane-spanning segment; sequence ILIVPIIILPPVALGILAMVS. The Cytoplasmic segment spans residues 108–179; the sequence is RAEDSKDHKS…CIGKGNYLQF (72 aa). The DHHC domain maps to 134 to 184; it reads IKCSTCRIVKPARSKHCSICNRCVLVADHHCIWINNCIGKGNYLQFYLFLI. A helical transmembrane segment spans residues 180–200; the sequence is YLFLISNIFSMCYAFLRLWYI. The Lumenal portion of the chain corresponds to 201–216; sequence SLNSTSTLPRAVLTLT. A helical transmembrane segment spans residues 217 to 237; the sequence is ILCGCFTIICAIFTYLQLAIV. The Cytoplasmic portion of the chain corresponds to 238-336; it reads KEGMTTNEQD…TFLANLTDLI (99 aa).

It belongs to the DHHC palmitoyltransferase family. SWF1 subfamily.

The protein localises to the endoplasmic reticulum membrane. It catalyses the reaction L-cysteinyl-[protein] + hexadecanoyl-CoA = S-hexadecanoyl-L-cysteinyl-[protein] + CoA. In terms of biological role, palmitoyltransferase that targets several endosomal SNAREs. Palmitoylates the SNAREs SNC1, SNC2, SYN8 and TLG1, at cysteine residues close to the cytoplasmic end of their transmembrane domain. May have a role in the cellular quality control of transmembrane domain-containing proteins. The protein is Palmitoyltransferase SWF1 (SWF1) of Saccharomyces cerevisiae (strain ATCC 204508 / S288c) (Baker's yeast).